Here is a 427-residue protein sequence, read N- to C-terminus: Serine--tRNA ligase (427 aa).

231–233 (TAE) provides a ligand contact to L-serine. 262-264 (RSE) lines the ATP pocket. Glu285 serves as a coordination point for L-serine. Residue 349–352 (EISS) participates in ATP binding. Ser385 contributes to the L-serine binding site.

It belongs to the class-II aminoacyl-tRNA synthetase family. Type-1 seryl-tRNA synthetase subfamily. In terms of assembly, homodimer. The tRNA molecule binds across the dimer.

Its subcellular location is the cytoplasm. The enzyme catalyses tRNA(Ser) + L-serine + ATP = L-seryl-tRNA(Ser) + AMP + diphosphate + H(+). The catalysed reaction is tRNA(Sec) + L-serine + ATP = L-seryl-tRNA(Sec) + AMP + diphosphate + H(+). Its pathway is aminoacyl-tRNA biosynthesis; selenocysteinyl-tRNA(Sec) biosynthesis; L-seryl-tRNA(Sec) from L-serine and tRNA(Sec): step 1/1. In terms of biological role, catalyzes the attachment of serine to tRNA(Ser). Is also able to aminoacylate tRNA(Sec) with serine, to form the misacylated tRNA L-seryl-tRNA(Sec), which will be further converted into selenocysteinyl-tRNA(Sec). This is Serine--tRNA ligase from Allorhizobium ampelinum (strain ATCC BAA-846 / DSM 112012 / S4) (Agrobacterium vitis (strain S4)).